The following is a 253-amino-acid chain: 5'/3'-nucleotidase SurE (253 aa).

Residues Asp8, Asp9, Ser39, and Asn92 each coordinate a divalent metal cation.

Belongs to the SurE nucleotidase family. It depends on a divalent metal cation as a cofactor.

It is found in the cytoplasm. It carries out the reaction a ribonucleoside 5'-phosphate + H2O = a ribonucleoside + phosphate. It catalyses the reaction a ribonucleoside 3'-phosphate + H2O = a ribonucleoside + phosphate. The enzyme catalyses [phosphate](n) + H2O = [phosphate](n-1) + phosphate + H(+). Its function is as follows. Nucleotidase with a broad substrate specificity as it can dephosphorylate various ribo- and deoxyribonucleoside 5'-monophosphates and ribonucleoside 3'-monophosphates with highest affinity to 3'-AMP. Also hydrolyzes polyphosphate (exopolyphosphatase activity) with the preference for short-chain-length substrates (P20-25). Might be involved in the regulation of dNTP and NTP pools, and in the turnover of 3'-mononucleotides produced by numerous intracellular RNases (T1, T2, and F) during the degradation of various RNAs. The protein is 5'/3'-nucleotidase SurE of Cronobacter sakazakii (strain ATCC BAA-894) (Enterobacter sakazakii).